The primary structure comprises 277 residues: MQHETHTHGINMSALGRDKQSLNLERETVAIEVPGLSLFYGEKQALYDVSMNIPKQRVTAFIGPSGCGKSTLLRTFNRMNDLVDGCRVEGAINLYGNNIYRKGEDVAELRRRVGMVFQKPNPFPKTIYENVVYGLRIQGINKKRILDEAVEWALKGAALWDEVKDRLHDSALGLSGGQQQRLVIARTIAVEPEVLLLDEPCSALDPISTLKVEELIYELKSKFTIVIVTHNMQQAARVSDYTAFMYMGKLVEFGDTDTLFTNPAKKQTEDYITGRYG.

The ABC transporter domain occupies 31–272; it reads IEVPGLSLFY…PAKKQTEDYI (242 aa). 63-70 is an ATP binding site; it reads GPSGCGKS.

The protein belongs to the ABC transporter superfamily. Phosphate importer (TC 3.A.1.7) family. In terms of assembly, the complex is composed of two ATP-binding proteins (PstB), two transmembrane proteins (PstC and PstA) and a solute-binding protein (PstS).

It localises to the cell inner membrane. The enzyme catalyses phosphate(out) + ATP + H2O = ADP + 2 phosphate(in) + H(+). Part of the ABC transporter complex PstSACB involved in phosphate import. Responsible for energy coupling to the transport system. The sequence is that of Phosphate import ATP-binding protein PstB from Pseudomonas fluorescens (strain Pf0-1).